Reading from the N-terminus, the 360-residue chain is Phosphoserine aminotransferase (360 aa).

An L-glutamate-binding site is contributed by arginine 41. Pyridoxal 5'-phosphate contacts are provided by tryptophan 101, threonine 152, aspartate 172, and glutamine 195. N6-(pyridoxal phosphate)lysine is present on lysine 196. 237 to 238 (NT) serves as a coordination point for pyridoxal 5'-phosphate.

Belongs to the class-V pyridoxal-phosphate-dependent aminotransferase family. SerC subfamily. As to quaternary structure, homodimer. Pyridoxal 5'-phosphate serves as cofactor.

The protein resides in the cytoplasm. It catalyses the reaction O-phospho-L-serine + 2-oxoglutarate = 3-phosphooxypyruvate + L-glutamate. The enzyme catalyses 4-(phosphooxy)-L-threonine + 2-oxoglutarate = (R)-3-hydroxy-2-oxo-4-phosphooxybutanoate + L-glutamate. The protein operates within amino-acid biosynthesis; L-serine biosynthesis; L-serine from 3-phospho-D-glycerate: step 2/3. It functions in the pathway cofactor biosynthesis; pyridoxine 5'-phosphate biosynthesis; pyridoxine 5'-phosphate from D-erythrose 4-phosphate: step 3/5. In terms of biological role, catalyzes the reversible conversion of 3-phosphohydroxypyruvate to phosphoserine and of 3-hydroxy-2-oxo-4-phosphonooxybutanoate to phosphohydroxythreonine. The polypeptide is Phosphoserine aminotransferase (Paraburkholderia phymatum (strain DSM 17167 / CIP 108236 / LMG 21445 / STM815) (Burkholderia phymatum)).